The sequence spans 554 residues: MKSDIEIAQDARMEPIEEIAEKAGLHKDQIELYGKYKAKVNTDIIDDDKKDGKLVLVTAITPTPAGEGKTTTTVGLGQALNLLGKKAIIALREPSLGPTMGIKGGAAGGGYSQVLPMEDINLHFTGDIHAIGAAHNLLSAVIDNHIKQGNDLGIDPTSVTWKRVVDMNDRALRNIVVGLGGKAHGVPREDGFMITVASEIMAILCLANNLEDLKNKISNIVVGYTYDGEAITAGDLKVSGAMTALLKDAIKPNLVQTLENTPAFIHGGPFANIAHGCNSIMATKMALKLGEITVTEAGFGADLGAEKFFNIKCRYAGLNPDAAVVVATVRALKMHGGVDKDSLSEENLDALARGFENLEKHLENVSKFGVPSVVAINRFPGDTEAELNLVRDKCEEMGVPVAISEVWARGGEGGLDLARKLVDVLENTPGQFSYLYDVNFPITDKIEKIAKEIYGADGVNYTSKALKQIDKYTELGYDKLPICMAKTQSSISDDPSLKGRPRGFRINVREVNLSAGAGFIIPLTGPVLTMPGLPKKPAAEGIDIDADGKISGLF.

Residue 63–70 coordinates ATP; sequence TPAGEGKT.

The protein belongs to the formate--tetrahydrofolate ligase family.

It carries out the reaction (6S)-5,6,7,8-tetrahydrofolate + formate + ATP = (6R)-10-formyltetrahydrofolate + ADP + phosphate. It participates in one-carbon metabolism; tetrahydrofolate interconversion. In Halothermothrix orenii (strain H 168 / OCM 544 / DSM 9562), this protein is Formate--tetrahydrofolate ligase.